Here is a 120-residue protein sequence, read N- to C-terminus: Ribonuclease P protein component (120 aa).

Belongs to the RnpA family. In terms of assembly, consists of a catalytic RNA component (M1 or rnpB) and a protein subunit.

The enzyme catalyses Endonucleolytic cleavage of RNA, removing 5'-extranucleotides from tRNA precursor.. Its function is as follows. RNaseP catalyzes the removal of the 5'-leader sequence from pre-tRNA to produce the mature 5'-terminus. It can also cleave other RNA substrates such as 4.5S RNA. The protein component plays an auxiliary but essential role in vivo by binding to the 5'-leader sequence and broadening the substrate specificity of the ribozyme. The polypeptide is Ribonuclease P protein component (Bordetella avium (strain 197N)).